Consider the following 206-residue polypeptide: Enterobactin synthase component D (206 aa).

Residues D107, E109, and E152 each coordinate Mg(2+).

Belongs to the P-Pant transferase superfamily. EntD family. EntB, EntD, EntE, and EntF form a multienzyme complex called enterobactin synthase. The cofactor is Mg(2+).

It is found in the membrane. It catalyses the reaction apo-[aryl-carrier protein] + CoA = holo-[aryl-carrier protein] + adenosine 3',5'-bisphosphate + H(+). The catalysed reaction is apo-[peptidyl-carrier protein] + CoA = holo-[peptidyl-carrier protein] + adenosine 3',5'-bisphosphate + H(+). It participates in siderophore biosynthesis; enterobactin biosynthesis. Functionally, involved in the biosynthesis of the siderophore enterobactin (enterochelin), which is a macrocyclic trimeric lactone of N-(2,3-dihydroxybenzoyl)-serine. The serine trilactone serves as a scaffolding for the three catechol functionalities that provide hexadentate coordination for the tightly ligated iron(2+) atoms. Plays an essential role in the assembly of the enterobactin by catalyzing the transfer of the 4'-phosphopantetheine (Ppant) moiety from coenzyme A to the apo-domains of both EntB (ArCP domain) and EntF (PCP domain) to yield their holo-forms which make them competent for the activation of 2,3-dihydroxybenzoate (DHB) and L-serine, respectively. This chain is Enterobactin synthase component D, found in Escherichia coli (strain K12).